Here is a 186-residue protein sequence, read N- to C-terminus: Probable RNA 2'-phosphotransferase (186 aa).

Belongs to the KptA/TPT1 family.

In terms of biological role, removes the 2'-phosphate from RNA via an intermediate in which the phosphate is ADP-ribosylated by NAD followed by a presumed transesterification to release the RNA and generate ADP-ribose 1''-2''-cyclic phosphate (APPR&gt;P). May function as an ADP-ribosylase. This chain is Probable RNA 2'-phosphotransferase, found in Agrobacterium fabrum (strain C58 / ATCC 33970) (Agrobacterium tumefaciens (strain C58)).